A 170-amino-acid chain; its full sequence is 4-hydroxyphenylacetate 3-monooxygenase reductase component (170 aa).

The protein belongs to the non-flavoprotein flavin reductase family. HpaC subfamily. As to quaternary structure, homodimer. 4-HPA 3-monooxygenase consists of a reductase component HpaC and an oxygenase component HpaB.

The enzyme catalyses a reduced flavin + NAD(+) = an oxidized flavin + NADH + 2 H(+). Its pathway is aromatic compound metabolism; 4-hydroxyphenylacetate degradation; pyruvate and succinate semialdehyde from 4-hydroxyphenylacetate: step 1/7. Its function is as follows. Catalyzes the reduction of free flavins (FMN, FAD and riboflavin) by NADH. Subsequently, the reduced flavins diffuse to the large HpaB component or to other electron acceptors such as cytochrome c and Fe(3+) ion. In Salmonella typhimurium (strain LT2 / SGSC1412 / ATCC 700720), this protein is 4-hydroxyphenylacetate 3-monooxygenase reductase component (hpaC).